The chain runs to 300 residues: Iron-dependent extradiol dioxygenase (300 aa).

2 VOC domains span residues 5–120 (SLAY…AFHG) and 142–270 (GLGH…FGCE). H145 is a Fe cation binding site. Substrate-binding residues include H200, H215, D250, and Y256. H215 lines the Fe cation pocket. E266 is a Fe cation binding site.

The protein belongs to the extradiol ring-cleavage dioxygenase family. As to quaternary structure, homodimer. Fe(2+) is required as a cofactor.

The enzyme catalyses 3,4-dihydroxy-9,10-secoandrosta-1,3,5(10)-triene-9,17-dione + O2 = (1E,2Z)-3-hydroxy-5,9,17-trioxo-4,5:9,10-disecoandrosta-1(10),2-dien-4-oate + H(+). It functions in the pathway steroid metabolism; cholesterol metabolism. In terms of biological role, catalyzes the meta-cleavage of 3,4-dihydroxy-9,10-seconandrost-1,3,5(10)-triene-9,17-dione (3,4-DHSA) to produce 4,5-9,10-diseco-3-hydroxy-5,9,17-trioxoandrosta-1(10),2-diene-4-oic acid (4,9-DSHA). Also involved in biphenyl and polychlorinated biphenyls (PCBs) degradation. This is Iron-dependent extradiol dioxygenase (hsaC) from Rhodococcus jostii (strain RHA1).